We begin with the raw amino-acid sequence, 235 residues long: Ribonuclease PH (235 aa).

Phosphate-binding positions include Arg86 and 124–126; that span reads GTR.

The protein belongs to the RNase PH family. As to quaternary structure, homohexameric ring arranged as a trimer of dimers.

It carries out the reaction tRNA(n+1) + phosphate = tRNA(n) + a ribonucleoside 5'-diphosphate. In terms of biological role, phosphorolytic 3'-5' exoribonuclease that plays an important role in tRNA 3'-end maturation. Removes nucleotide residues following the 3'-CCA terminus of tRNAs; can also add nucleotides to the ends of RNA molecules by using nucleoside diphosphates as substrates, but this may not be physiologically important. Probably plays a role in initiation of 16S rRNA degradation (leading to ribosome degradation) during starvation. The chain is Ribonuclease PH from Francisella tularensis subsp. novicida (strain U112).